The primary structure comprises 144 residues: C-type isolectin Sp-CL4 (144 aa).

The region spanning 27–144 (DENRKVKYFE…CSEKLPFMCA (118 aa)) is the C-type lectin domain. Disulfide bonds link Cys-48/Cys-143 and Cys-119/Cys-135.

It belongs to the true venom lectin family. Glycosylated with a carbohydrate of 383 Da. Expressed by the venom gland.

The protein localises to the secreted. Functionally, the role of this hemagglutinin in the venom is unknown, because it is masked by the high venom hemolytic activity. Lectin with specificity to galactose. Induces hemagglutination. The chain is C-type isolectin Sp-CL4 from Scorpaena plumieri (Spotted scorpionfish).